We begin with the raw amino-acid sequence, 293 residues long: 5'-3' exoribonuclease Rnm (293 aa).

Histidine 13, histidine 15, aspartate 20, histidine 45, glutamate 72, histidine 83, histidine 198, aspartate 255, and histidine 257 together coordinate Mn(2+).

It belongs to the PHP family. TrpH/YciV subfamily. The cofactor is Mn(2+).

The catalysed reaction is a ribonucleoside 3',5'-bisphosphate + H2O = a ribonucleoside 5'-phosphate + phosphate. Functionally, exoribonuclease that catalyzes the last steps of 5S, 16S and 23S rRNA 5'-end maturation. Removes 3 nucleotides (nt) from the 5' end of 5S, 16S and 23S rRNA precursors to generate the mature 5' ends. Precursors with longer extensions are not processed (7 nt at the 5' end of pre-23S rRNA or 66 nt at the 5'-end of 16S rRNA are not processed). 5S and 23S rRNA maturation occurs more efficiently and accurately on ribosomal particles as compared to free RNA; the enzyme overdigests free RNA but generates the correct 5'-end in ribosomes from rnm deletion strains. Efficiently catalyzes the hydrolysis of the 3'-phosphate from 3',5'-bis-phosphonucleotides as well as the successive hydrolysis of 5'-phosphomononucleotides from the 5'-end of short pieces of RNA and DNA, with no specificity toward the identity of the nucleotide base. Is more efficient at hydrolyzing RNA oligonucleotides than DNA oligonucleotides. This enzyme can also hydrolyze annealed DNA duplexes, albeit at a catalytic efficiency approximately 10-fold lower than that of the corresponding single-stranded oligonucleotides. This Escherichia coli (strain K12) protein is 5'-3' exoribonuclease Rnm.